A 335-amino-acid polypeptide reads, in one-letter code: tRNA N6-adenosine threonylcarbamoyltransferase (335 aa).

Fe cation-binding residues include His-110 and His-114. Substrate is bound by residues 132–136 (LVSGG), Asp-165, Gly-178, and Asn-271. A Fe cation-binding site is contributed by Asp-299.

The protein belongs to the KAE1 / TsaD family. It depends on Fe(2+) as a cofactor.

The protein localises to the cytoplasm. The catalysed reaction is L-threonylcarbamoyladenylate + adenosine(37) in tRNA = N(6)-L-threonylcarbamoyladenosine(37) in tRNA + AMP + H(+). In terms of biological role, required for the formation of a threonylcarbamoyl group on adenosine at position 37 (t(6)A37) in tRNAs that read codons beginning with adenine. Is involved in the transfer of the threonylcarbamoyl moiety of threonylcarbamoyl-AMP (TC-AMP) to the N6 group of A37, together with TsaE and TsaB. TsaD likely plays a direct catalytic role in this reaction. This is tRNA N6-adenosine threonylcarbamoyltransferase from Campylobacter jejuni subsp. jejuni serotype O:2 (strain ATCC 700819 / NCTC 11168).